The sequence spans 140 residues: Large ribosomal subunit protein bL17 (140 aa).

The disordered stretch occupies residues 121-140 (AAKGLDSGPTAEANDDDSEE).

This sequence belongs to the bacterial ribosomal protein bL17 family. In terms of assembly, part of the 50S ribosomal subunit. Contacts protein L32.

The polypeptide is Large ribosomal subunit protein bL17 (Rhodospirillum rubrum (strain ATCC 11170 / ATH 1.1.1 / DSM 467 / LMG 4362 / NCIMB 8255 / S1)).